The primary structure comprises 100 residues: Putative septation protein SpoVG (100 aa).

This sequence belongs to the SpoVG family.

In terms of biological role, could be involved in septation. The chain is Putative septation protein SpoVG from Staphylococcus aureus (strain MRSA252).